The primary structure comprises 557 residues: Formate--tetrahydrofolate ligase (557 aa).

ATP is bound at residue 66-73 (TPAGEGKS).

The protein belongs to the formate--tetrahydrofolate ligase family.

The catalysed reaction is (6S)-5,6,7,8-tetrahydrofolate + formate + ATP = (6R)-10-formyltetrahydrofolate + ADP + phosphate. The protein operates within one-carbon metabolism; tetrahydrofolate interconversion. The protein is Formate--tetrahydrofolate ligase of Lactobacillus johnsonii (strain CNCM I-12250 / La1 / NCC 533).